The following is a 182-amino-acid chain: DOMON domain-containing protein Y73F4A.1 (182 aa).

The N-terminal stretch at 1 to 18 is a signal peptide; the sequence is MFVLAIVFAFVFIPSSSS. A DOMON domain is found at 26 to 143; that stretch reads ELVSMNWNVK…CLNWMVVPGG (118 aa). Asparagine 47 and asparagine 128 each carry an N-linked (GlcNAc...) asparagine glycan.

The protein localises to the secreted. This chain is DOMON domain-containing protein Y73F4A.1, found in Caenorhabditis elegans.